A 340-amino-acid chain; its full sequence is Adenosine deaminase (340 aa).

Zn(2+)-binding residues include His15 and His17. Substrate is bound by residues His17, Asp19, and Gly172. His199 contributes to the Zn(2+) binding site. Glu202 serves as the catalytic Proton donor. Residue Asp279 coordinates Zn(2+).

The protein belongs to the metallo-dependent hydrolases superfamily. Adenosine and AMP deaminases family. Adenosine deaminase subfamily. The cofactor is Zn(2+).

It carries out the reaction adenosine + H2O + H(+) = inosine + NH4(+). The catalysed reaction is 2'-deoxyadenosine + H2O + H(+) = 2'-deoxyinosine + NH4(+). Its function is as follows. Catalyzes the hydrolytic deamination of adenosine and 2-deoxyadenosine. This Streptococcus agalactiae serotype III (strain NEM316) protein is Adenosine deaminase.